The sequence spans 97 residues: Aspartyl/glutamyl-tRNA(Asn/Gln) amidotransferase subunit C (97 aa).

Belongs to the GatC family. Heterotrimer of A, B and C subunits.

The catalysed reaction is L-glutamyl-tRNA(Gln) + L-glutamine + ATP + H2O = L-glutaminyl-tRNA(Gln) + L-glutamate + ADP + phosphate + H(+). It catalyses the reaction L-aspartyl-tRNA(Asn) + L-glutamine + ATP + H2O = L-asparaginyl-tRNA(Asn) + L-glutamate + ADP + phosphate + 2 H(+). In terms of biological role, allows the formation of correctly charged Asn-tRNA(Asn) or Gln-tRNA(Gln) through the transamidation of misacylated Asp-tRNA(Asn) or Glu-tRNA(Gln) in organisms which lack either or both of asparaginyl-tRNA or glutaminyl-tRNA synthetases. The reaction takes place in the presence of glutamine and ATP through an activated phospho-Asp-tRNA(Asn) or phospho-Glu-tRNA(Gln). The sequence is that of Aspartyl/glutamyl-tRNA(Asn/Gln) amidotransferase subunit C from Cyanothece sp. (strain PCC 7425 / ATCC 29141).